The primary structure comprises 375 residues: Tyrosine--tRNA ligase (375 aa).

Tyr37, Tyr168, Gln172, Asp175, and Gln190 together coordinate L-tyrosine. Residues 251 to 255 carry the 'KMSKS' region motif; it reads KMSKS. Lys254 provides a ligand contact to ATP.

It belongs to the class-I aminoacyl-tRNA synthetase family. TyrS type 4 subfamily. As to quaternary structure, homodimer.

The protein localises to the cytoplasm. It carries out the reaction tRNA(Tyr) + L-tyrosine + ATP = L-tyrosyl-tRNA(Tyr) + AMP + diphosphate + H(+). Its function is as follows. Catalyzes the attachment of tyrosine to tRNA(Tyr) in a two-step reaction: tyrosine is first activated by ATP to form Tyr-AMP and then transferred to the acceptor end of tRNA(Tyr). The protein is Tyrosine--tRNA ligase of Thermococcus kodakarensis (strain ATCC BAA-918 / JCM 12380 / KOD1) (Pyrococcus kodakaraensis (strain KOD1)).